The chain runs to 248 residues: MSFPYFISPEQAMRERSELARKGIARAKSVVALAYAGGVLFVAENPSRSLQKISELYDRVGFAAAGKFNEFDNLRRGGIQFADTRGYAYDRRDVTGRQLANVYAQTLGTIFTEQAKPYEVELCVAEVAHYGETKPPELYRITYDGSIADEPHFVVMGGTTEPIANALKESYAENASLTDALGIAVAALRAGSADTSGGDQPTLGVASLEVAVLDANRPRRAFRRITGSALQALLVDQESPQSDGESSG.

This sequence belongs to the peptidase T1A family. As to quaternary structure, the 20S proteasome core is composed of 14 alpha and 14 beta subunits that assemble into four stacked heptameric rings, resulting in a barrel-shaped structure. The two inner rings, each composed of seven catalytic beta subunits, are sandwiched by two outer rings, each composed of seven alpha subunits. The catalytic chamber with the active sites is on the inside of the barrel. Has a gated structure, the ends of the cylinder being occluded by the N-termini of the alpha-subunits. Is capped by the proteasome-associated ATPase, ARC.

The protein resides in the cytoplasm. Its pathway is protein degradation; proteasomal Pup-dependent pathway. With respect to regulation, the formation of the proteasomal ATPase ARC-20S proteasome complex, likely via the docking of the C-termini of ARC into the intersubunit pockets in the alpha-rings, may trigger opening of the gate for substrate entry. Interconversion between the open-gate and close-gate conformations leads to a dynamic regulation of the 20S proteasome proteolysis activity. Component of the proteasome core, a large protease complex with broad specificity involved in protein degradation. The sequence is that of Proteasome subunit alpha from Mycobacterium bovis (strain BCG / Pasteur 1173P2).